The sequence spans 294 residues: HTH-type transcriptional regulator TcbR (294 aa).

The region spanning 1-58 (MEFRQLKYFIAVAEAGNMAAAAKRLHVSQPPITRQMQALEADLGVVLLERSHRGIELT) is the HTH lysR-type domain. Residues 18 to 37 (MAAAAKRLHVSQPPITRQMQ) constitute a DNA-binding region (H-T-H motif).

It belongs to the LysR transcriptional regulatory family.

Involved in regulation of chlorinated catechol metabolism. Transcriptional activator of the tcbCDEF chlorocatechol oxidative operon. May bind 2-chloromuconate as an inducer. The sequence is that of HTH-type transcriptional regulator TcbR (tcbR) from Pseudomonas sp. (strain P51).